A 181-amino-acid polypeptide reads, in one-letter code: tRNA-splicing endonuclease (181 aa).

Active-site residues include Y118, H126, and K157.

The protein belongs to the tRNA-intron endonuclease family. Archaeal short subfamily. As to quaternary structure, homotetramer; although the tetramer contains four active sites, only two participate in the cleavage. Therefore, it should be considered as a dimer of dimers.

The enzyme catalyses pretRNA = a 3'-half-tRNA molecule with a 5'-OH end + a 5'-half-tRNA molecule with a 2',3'-cyclic phosphate end + an intron with a 2',3'-cyclic phosphate and a 5'-hydroxyl terminus.. In terms of biological role, endonuclease that removes tRNA introns. Cleaves pre-tRNA at the 5'- and 3'-splice sites to release the intron. The products are an intron and two tRNA half-molecules bearing 2',3' cyclic phosphate and 5'-OH termini. Recognizes a pseudosymmetric substrate in which 2 bulged loops of 3 bases are separated by a stem of 4 bp. The sequence is that of tRNA-splicing endonuclease from Hyperthermus butylicus (strain DSM 5456 / JCM 9403 / PLM1-5).